Consider the following 468-residue polypeptide: Putative magnesium transporter MRS2-G (468 aa).

Disordered stretches follow at residues 1-76 (MGRR…AGKV) and 183-204 (GQPG…QVPR). 2 stretches are compositionally biased toward low complexity: residues 14 to 23 (ASNASTSSST) and 31 to 45 (RLPS…SSPS). Pro residues predominate over residues 46 to 67 (PASPSPPPPSASHPAPPSPPLA). Positions 187 to 201 (GDDHGEKHDDSHGDQ) are enriched in basic and acidic residues. 2 helical membrane passes run 402-422 (LTLT…GAFA) and 437-457 (FFWP…IVLL).

This sequence belongs to the CorA metal ion transporter (MIT) (TC 1.A.35.5) family. Interacts with CYCB2-2.

The protein resides in the membrane. In terms of biological role, putative magnesium transporter. The chain is Putative magnesium transporter MRS2-G (MRS2-G) from Oryza sativa subsp. japonica (Rice).